Here is a 267-residue protein sequence, read N- to C-terminus: 2-keto-3-deoxy-L-rhamnonate aldolase (267 aa).

Residue H49 is the Proton acceptor of the active site. Q151 contacts substrate. E153 is a Mg(2+) binding site. 2 residues coordinate substrate: A178 and D179. A Mg(2+)-binding site is contributed by D179.

It belongs to the HpcH/HpaI aldolase family. KDR aldolase subfamily. As to quaternary structure, homohexamer. Requires Mg(2+) as cofactor.

It catalyses the reaction 2-dehydro-3-deoxy-L-rhamnonate = (S)-lactaldehyde + pyruvate. Functionally, catalyzes the reversible retro-aldol cleavage of 2-keto-3-deoxy-L-rhamnonate (KDR) to pyruvate and lactaldehyde. This Shigella sonnei (strain Ss046) protein is 2-keto-3-deoxy-L-rhamnonate aldolase.